We begin with the raw amino-acid sequence, 405 residues long: Imidazolonepropionase (405 aa).

Fe(3+) is bound by residues His-73 and His-75. Positions 73 and 75 each coordinate Zn(2+). 4-imidazolone-5-propanoate is bound by residues Arg-82, Tyr-145, and His-178. Tyr-145 is an N-formimidoyl-L-glutamate binding site. His-243 contacts Fe(3+). His-243 contributes to the Zn(2+) binding site. Residue Gln-246 coordinates 4-imidazolone-5-propanoate. Asp-318 is a binding site for Fe(3+). Asp-318 contacts Zn(2+). N-formimidoyl-L-glutamate contacts are provided by Asn-320 and Gly-322. Thr-323 contacts 4-imidazolone-5-propanoate.

Belongs to the metallo-dependent hydrolases superfamily. HutI family. The cofactor is Zn(2+). Requires Fe(3+) as cofactor.

The protein resides in the cytoplasm. The enzyme catalyses 4-imidazolone-5-propanoate + H2O = N-formimidoyl-L-glutamate. The protein operates within amino-acid degradation; L-histidine degradation into L-glutamate; N-formimidoyl-L-glutamate from L-histidine: step 3/3. Its function is as follows. Catalyzes the hydrolytic cleavage of the carbon-nitrogen bond in imidazolone-5-propanoate to yield N-formimidoyl-L-glutamate. It is the third step in the universal histidine degradation pathway. The protein is Imidazolonepropionase of Brucella suis (strain ATCC 23445 / NCTC 10510).